The following is a 35-amino-acid chain: Kappa-stichotoxin-She3a (35 aa).

The ShKT domain maps to 3–35; sequence CIDTIPKSRCTAFQCKHSMKYRLSFCRKTCGTC. 3 cysteine pairs are disulfide-bonded: Cys-3–Cys-35, Cys-12–Cys-28, and Cys-17–Cys-32.

The protein belongs to the sea anemone type 1 potassium channel toxin family. Type 1a subfamily.

The protein resides in the secreted. The protein localises to the nematocyst. Peptide with both antimicrobial and neurotoxin activities. Inhibits voltage-dependent potassium channels. Potently blocks Kv1.1/KCNA1 (IC(50)=6.7-87 pM) and Kv1.3/KCNA3 (IC(50)=10-250 pM). Less potently blocks Kv1.4/KCNA4 (IC(50)=0.31 nM), and Kv1.6/KCNA6 (IC(50)=0.16 nM). Shows moderate activity on Kv1.2/KCNA2 (IC(50)=9 nM), Kv1.7/KCNA7 (IC(50)=11.5 nM), and KCa3.1/KCNN4 (Kd=0.03-30 nM). Blocks Kv channels by binding to a shallow vestibule at the outer entrance to the ion conduction pathway and occluding the entrance to the pore. Shows antibacterial activity against all tested bacteria (the Gram-positive bacteria B.subtilis and S.aureus, and the Gram-negative bacteria S.typhimurium and P.aeruginosa). In Stichodactyla helianthus (Sun anemone), this protein is Kappa-stichotoxin-She3a.